Here is a 50-residue protein sequence, read N- to C-terminus: Alpha-conotoxin CnIG (50 aa).

A signal peptide spans 1–7 (LTTTVVS). Positions 1–13 (LTTTVVSFPSDSA) are enriched in polar residues. Residues 1 to 26 (LTTTVVSFPSDSASDGRDNEAKDERS) are disordered. Positions 8-35 (FPSDSASDGRDNEAKDERSDMYELKRNG) are excised as a propeptide. Residues 14–26 (SDGRDNEAKDERS) show a composition bias toward basic and acidic residues. 2 cysteine pairs are disulfide-bonded: Cys37-Cys42 and Cys38-Cys48. Cys48 is modified (cysteine amide).

This sequence belongs to the conotoxin A superfamily. In terms of tissue distribution, expressed by the venom duct.

It is found in the secreted. In Conus consors (Singed cone), this protein is Alpha-conotoxin CnIG.